We begin with the raw amino-acid sequence, 171 residues long: Shikimate kinase (171 aa).

Position 11-16 (11-16 (GTGKTT)) interacts with ATP. Threonine 15 provides a ligand contact to Mg(2+). Aspartate 33, arginine 57, and glycine 79 together coordinate substrate. Arginine 117 provides a ligand contact to ATP. Residue arginine 136 participates in substrate binding.

Belongs to the shikimate kinase family. In terms of assembly, monomer. Requires Mg(2+) as cofactor.

The protein localises to the cytoplasm. It catalyses the reaction shikimate + ATP = 3-phosphoshikimate + ADP + H(+). It participates in metabolic intermediate biosynthesis; chorismate biosynthesis; chorismate from D-erythrose 4-phosphate and phosphoenolpyruvate: step 5/7. In terms of biological role, catalyzes the specific phosphorylation of the 3-hydroxyl group of shikimic acid using ATP as a cosubstrate. The sequence is that of Shikimate kinase from Caldanaerobacter subterraneus subsp. tengcongensis (strain DSM 15242 / JCM 11007 / NBRC 100824 / MB4) (Thermoanaerobacter tengcongensis).